The following is a 509-amino-acid chain: MVAQPSPIVGRLKLPESMPSLVSLEELTATKVLVTFLTIVIIAPRVFTVIKNAFSPISSIPGPLLNKLSPWPLTIATIKGTSHHFARSLHEKYGPIVVLAPGMVAVADTKEIKRIIQTEDWTKSEAIYGNFRQDPQRPTLLAYTDKKAYAKRKRMLSSMFGIKYIRSMEPIMMTCVEAAVRQLNKFCDEGTQGVAVVDMQHLIHSLAIDIIGITTFGGSLNVVDNGSHPLPSRLKAGLRIAGLMQLIPWIRFIPFLPTRDPYVDRFTYDIVDGRRQELESSQHSDLLQKLVEASDDSPGSDFRTSDVQDESVVMLTAGSETTANAELFTLMMLLKNPKVMKKLVDEVDQWYPPSEPDRQTDCGYSQAGMVYLQACIDETMRLVPGQATGSPRETSKDDVVLGYRIPAGTTVFPNTQEGHTQDAHWEEPQKFVPERWLEAQATNVPYWPFSAGSRVCIGKHFAFQEMHLTLVTLLRKFKFEYVDGQDESTVFRVAQQLKAESYRMKVSRR.

Residues 30-50 (TKVLVTFLTIVIIAPRVFTVI) traverse the membrane as a helical segment. Residue C456 participates in heme binding.

Belongs to the cytochrome P450 family. Heme is required as a cofactor.

The protein localises to the membrane. It functions in the pathway mycotoxin biosynthesis. Functionally, cytochrome P450 monooxygenase; part of the gene cluster that mediates the biosynthesis of the mycotoxin lucilactaene and the lucilactaene-related compound NG-391 that act as cell cycle inhibitors with potent growth inhibitory activity against malarial parasites, moderate growth inhibitory activity against cancer cells, and no activity against bacteria and fungi. Within the pathway, LUC2 performs C-20 methyl group hydroxylation of several intermediates. LUC2 does not perform the full oxidation of the C-20 methyl group into carboxylic acid, which is a prerequisite for the final methylation step. The pathway begins with the hybrid PKS-NRPS synthetase LUC5 which is responsible for the condensation of one acetyl-coenzyme A (CoA) unit with six malonyl-CoA units and the amide linkage of the arising heptaketide and homoserine, subsequently releasing the first intermediate prelucilactaene B. Both the cytochrome P450 monooxygenase LUC2 and the hydrolase LUC6 function in parallel in modification of prelucilactaene B. LUC6 may catalyze the 2-pyrrolidone ring formation to form prelucilactaene C from prelucilactaene B, followed by C-15 hydroxylation by the same enzyme to give prelucilactaene D, which is then converted to prelucilactaene E by epoxidation, and finally to prelucilactaene F by cyclization. Prelucilactane D, prelucilactaene E, and prelucilactaene F can be converted to dihydrolucilactaene, NG391, and lucilactaene, respectively, via C-20 methyl group hydroxylation by the cytochrome P450 monooxygenase LUC2. However, LUC2, unlike FUS8 in fusarin C biosynthesis, is not enough for the full oxidation of the C-20 methyl group into carboxylic acid, which is a prerequisite for the final methylation step. The aldehyde dehydrogenase LUC3 is involved in the biosynthesis by further oxidation of the C-20 alcoholic analog prelucilactaene G into a carboxylic derivative. This unidentified carboxylic derivative may be converted to demethyllucilactaene. As the last step, the methyltransferase LUC1 methylates the hydroxyl group at C-21 of demethyllucilactaene to generate lucilactaene. In Fusarium sp, this protein is Cytochrome P450 monooxygenase LUC2.